The primary structure comprises 141 residues: Hemoglobin subunit alpha-D (141 aa).

A Globin domain is found at 1–141 (MLTAEDKKLI…VSAVLAEKYR (141 aa)). The heme b site is built by His-58 and His-87.

Belongs to the globin family. As to quaternary structure, heterotetramer of two alpha-D chains and two beta chains. In terms of tissue distribution, red blood cells.

Functionally, involved in oxygen transport from the lung to the various peripheral tissues. This is Hemoglobin subunit alpha-D (HBAD) from Meleagris gallopavo (Wild turkey).